The chain runs to 275 residues: Elongation factor Ts (275 aa).

The segment at 76–79 (TDFV) is involved in Mg(2+) ion dislocation from EF-Tu.

The protein belongs to the EF-Ts family.

The protein localises to the cytoplasm. Functionally, associates with the EF-Tu.GDP complex and induces the exchange of GDP to GTP. It remains bound to the aminoacyl-tRNA.EF-Tu.GTP complex up to the GTP hydrolysis stage on the ribosome. In Corynebacterium kroppenstedtii (strain DSM 44385 / JCM 11950 / CIP 105744 / CCUG 35717), this protein is Elongation factor Ts.